The chain runs to 129 residues: Cuticle protein 12.5 (129 aa).

10 tandem repeats follow at residues 7–10 (AAPA), 15–18 (AAPA), 23–26 (AAPA), 28–31 (AAPV), 37–40 (AAPA), 67–70 (AAPA), 79–82 (AAPA), 91–94 (AAPA), 103–106 (AAPA), and 117–120 (AAPA).

Component of the cuticle of migratory locust which contains more than 100 different structural proteins. The chain is Cuticle protein 12.5 from Locusta migratoria (Migratory locust).